Consider the following 558-residue polypeptide: Formate--tetrahydrofolate ligase (558 aa).

66-73 (TPAGEGKT) is an ATP binding site.

The protein belongs to the formate--tetrahydrofolate ligase family.

The enzyme catalyses (6S)-5,6,7,8-tetrahydrofolate + formate + ATP = (6R)-10-formyltetrahydrofolate + ADP + phosphate. The protein operates within one-carbon metabolism; tetrahydrofolate interconversion. The chain is Formate--tetrahydrofolate ligase from Neisseria meningitidis serogroup C (strain 053442).